The sequence spans 125 residues: Small ribosomal subunit protein uS13 (125 aa).

Belongs to the universal ribosomal protein uS13 family. In terms of assembly, part of the 30S ribosomal subunit. Forms a loose heterodimer with protein S19. Forms two bridges to the 50S subunit in the 70S ribosome.

Its function is as follows. Located at the top of the head of the 30S subunit, it contacts several helices of the 16S rRNA. In the 70S ribosome it contacts the 23S rRNA (bridge B1a) and protein L5 of the 50S subunit (bridge B1b), connecting the 2 subunits; these bridges are implicated in subunit movement. Contacts the tRNAs in the A and P-sites. The sequence is that of Small ribosomal subunit protein uS13 from Orientia tsutsugamushi (strain Boryong) (Rickettsia tsutsugamushi).